A 215-amino-acid polypeptide reads, in one-letter code: MINLALVIFLCTLLNQIVSWVGKSVLQEIAFTAYSWVFLSGTAAKQRKLRKQVLEDKAELGRTSSQDEFAKWAKLRRKLDKGLADLEKTNNTLSSSRSSFSKKFSTLLWLMTTGAQFLLSWWFRKQPIFWLPEGWVPYPVAWLLSFPSAPIGSVSSGAWGAICRRVLSTLQEIIQSLLAPSPAATGPVPTGPSSAKNDQPEAKIEALALEHEKLD.

Residues 1–4 (MINL) are Lumenal-facing. A helical membrane pass occupies residues 5–24 (ALVIFLCTLLNQIVSWVGKS). Residues 25 to 108 (VLQEIAFTAY…SFSKKFSTLL (84 aa)) lie on the Cytoplasmic side of the membrane. The stretch at 73-94 (AKLRRKLDKGLADLEKTNNTLS) forms a coiled coil. The chain crosses the membrane as a helical span at residues 109–129 (WLMTTGAQFLLSWWFRKQPIF). The Lumenal segment spans residues 130 to 153 (WLPEGWVPYPVAWLLSFPSAPIGS). Residues 154 to 170 (VSSGAWGAICRRVLSTL) traverse the membrane as a helical segment. Topologically, residues 171–215 (QEIIQSLLAPSPAATGPVPTGPSSAKNDQPEAKIEALALEHEKLD) are cytoplasmic. Residues 182–202 (PAATGPVPTGPSSAKNDQPEA) form a disordered region.

This sequence belongs to the WRB/GET1 family. As to quaternary structure, interacts with GET3.

It is found in the endoplasmic reticulum membrane. Required for the post-translational delivery of tail-anchored (TA) proteins to the endoplasmic reticulum. Acts as a membrane receptor for soluble GET3, which recognizes and selectively binds the transmembrane domain of TA proteins in the cytosol. The sequence is that of Protein GET1 from Cryptococcus neoformans var. neoformans serotype D (strain JEC21 / ATCC MYA-565) (Filobasidiella neoformans).